The following is a 202-amino-acid chain: Holliday junction branch migration complex subunit RuvA (202 aa).

The tract at residues 1–64 (MIGYLKGQIL…YDGTVLYGFL (64 aa)) is domain I. The segment at 65–146 (TKEDKQLWAI…AVTIAGVPKI (82 aa)) is domain II. A flexible linker region spans residues 147 to 155 (KIEGEAPFM). Residues 155–202 (MSEVMMALTALGYSPMEARKAIDQLYKTGLANDSVENIIRAALRILKK) form a domain III region.

It belongs to the RuvA family. Homotetramer. Forms an RuvA(8)-RuvB(12)-Holliday junction (HJ) complex. HJ DNA is sandwiched between 2 RuvA tetramers; dsDNA enters through RuvA and exits via RuvB. An RuvB hexamer assembles on each DNA strand where it exits the tetramer. Each RuvB hexamer is contacted by two RuvA subunits (via domain III) on 2 adjacent RuvB subunits; this complex drives branch migration. In the full resolvosome a probable DNA-RuvA(4)-RuvB(12)-RuvC(2) complex forms which resolves the HJ.

The protein resides in the cytoplasm. Its function is as follows. The RuvA-RuvB-RuvC complex processes Holliday junction (HJ) DNA during genetic recombination and DNA repair, while the RuvA-RuvB complex plays an important role in the rescue of blocked DNA replication forks via replication fork reversal (RFR). RuvA specifically binds to HJ cruciform DNA, conferring on it an open structure. The RuvB hexamer acts as an ATP-dependent pump, pulling dsDNA into and through the RuvAB complex. HJ branch migration allows RuvC to scan DNA until it finds its consensus sequence, where it cleaves and resolves the cruciform DNA. The polypeptide is Holliday junction branch migration complex subunit RuvA (Elusimicrobium minutum (strain Pei191)).